We begin with the raw amino-acid sequence, 450 residues long: LanC-like protein 2 (450 aa).

Glycine 2 is lipidated: N-myristoyl glycine. The segment at 2-15 (GETMSKRLKLHLGG) is interaction with inositol phospholipids. Tyrosine 198 is subject to Phosphotyrosine.

The protein belongs to the LanC-like protein family. In terms of assembly, interacts with an array of inositol phospholipids such as phosphatidylinositol 3-phosphate (PI3P), phosphatidylinositol 4-phosphate (PI4P) and phosphatidylinositol 5-phosphate (PI5P). PIP-binding enhances membrane association. Myristoylated. Essential for membrane association. As to expression, expressed in brain and testis.

It localises to the nucleus. The protein localises to the cytoplasm. Its subcellular location is the cell membrane. Its function is as follows. Necessary for abscisic acid (ABA) binding on the cell membrane and activation of the ABA signaling pathway in granulocytes. This Homo sapiens (Human) protein is LanC-like protein 2 (LANCL2).